The sequence spans 416 residues: Serine hydroxymethyltransferase (416 aa).

(6S)-5,6,7,8-tetrahydrofolate-binding positions include Leu-117 and 121–123 (GHL). Lys-226 is subject to N6-(pyridoxal phosphate)lysine. Glu-242 contacts (6S)-5,6,7,8-tetrahydrofolate.

It belongs to the SHMT family. As to quaternary structure, homodimer. Pyridoxal 5'-phosphate serves as cofactor.

The protein resides in the cytoplasm. It catalyses the reaction (6R)-5,10-methylene-5,6,7,8-tetrahydrofolate + glycine + H2O = (6S)-5,6,7,8-tetrahydrofolate + L-serine. Its pathway is one-carbon metabolism; tetrahydrofolate interconversion. It participates in amino-acid biosynthesis; glycine biosynthesis; glycine from L-serine: step 1/1. In terms of biological role, catalyzes the reversible interconversion of serine and glycine with tetrahydrofolate (THF) serving as the one-carbon carrier. This reaction serves as the major source of one-carbon groups required for the biosynthesis of purines, thymidylate, methionine, and other important biomolecules. Also exhibits THF-independent aldolase activity toward beta-hydroxyamino acids, producing glycine and aldehydes, via a retro-aldol mechanism. In Endomicrobium trichonymphae, this protein is Serine hydroxymethyltransferase.